A 372-amino-acid chain; its full sequence is Glutamate 5-kinase (372 aa).

Lys-14 contacts ATP. Residues Ser-54, Asp-141, and Asn-153 each coordinate substrate. 173 to 174 (TD) lines the ATP pocket. A PUA domain is found at 280–358 (RGHVVIDAGA…GEIETVLGYM (79 aa)).

It belongs to the glutamate 5-kinase family.

The protein resides in the cytoplasm. The enzyme catalyses L-glutamate + ATP = L-glutamyl 5-phosphate + ADP. It participates in amino-acid biosynthesis; L-proline biosynthesis; L-glutamate 5-semialdehyde from L-glutamate: step 1/2. Its function is as follows. Catalyzes the transfer of a phosphate group to glutamate to form L-glutamate 5-phosphate. The chain is Glutamate 5-kinase from Burkholderia vietnamiensis (strain G4 / LMG 22486) (Burkholderia cepacia (strain R1808)).